We begin with the raw amino-acid sequence, 279 residues long: RNases MRP/P 32.9 kDa subunit (279 aa).

Phosphoserine is present on S64.

The protein belongs to the eukaryotic/archaeal RNase P protein component 1 family. In terms of assembly, component of nuclear RNase P and RNase MRP complexes. RNase P consists of an RNA moiety and at least 9 protein subunits including POP1, POP3, POP4, POP5, POP6, POP7, POP8, RPP1 and RPR2. RNase MRP complex consists of an RNA moiety and at least 10 protein subunits including POP1, POP3, POP4, POP5, POP6, POP7, POP8, RMP1, RPP1 and SNM1, many of which are shared with the RNase P complex.

Its subcellular location is the nucleus. Its function is as follows. Required for 5.8S rRNA and tRNA processing; associated with RNase MRP and RNase P. This is RNases MRP/P 32.9 kDa subunit (POP4) from Saccharomyces cerevisiae (strain ATCC 204508 / S288c) (Baker's yeast).